Here is a 99-residue protein sequence, read N- to C-terminus: DNA-directed RNA polymerase subunit omega (99 aa).

The protein belongs to the RNA polymerase subunit omega family. As to quaternary structure, the RNAP catalytic core consists of 2 alpha, 1 beta, 1 beta' and 1 omega subunit. When a sigma factor is associated with the core the holoenzyme is formed, which can initiate transcription.

It catalyses the reaction RNA(n) + a ribonucleoside 5'-triphosphate = RNA(n+1) + diphosphate. In terms of biological role, promotes RNA polymerase assembly. Latches the N- and C-terminal regions of the beta' subunit thereby facilitating its interaction with the beta and alpha subunits. This chain is DNA-directed RNA polymerase subunit omega, found in Deinococcus deserti (strain DSM 17065 / CIP 109153 / LMG 22923 / VCD115).